Here is a 373-residue protein sequence, read N- to C-terminus: Peptide chain release factor 1-like, mitochondrial (373 aa).

Residues 1 to 25 (MRSGFLSGARRLWARRAFSRTPPPS) constitute a mitochondrion transit peptide. A coiled-coil region spans residues 56–110 (QLAAAARLLSEKERELRDTESLLHDENEDLKKLAESEIALCQKQITELKHQIISL). Residues 229-293 (PKDLRIDTKR…LRARLYSMHL (65 aa)) form a GGQ domain region. The short motif at 243–245 (GGQ) is the GGQ element. Position 245 is an N5-methylglutamine (Gln-245).

It belongs to the prokaryotic/mitochondrial release factor family. Post-translationally, methylation of glutamine in the GGQ triplet by HEMK1 is conserved from bacteria to mammals.

Its subcellular location is the mitochondrion. Functionally, mitochondrial peptide chain release factor that directs the termination of translation in response to the peptide chain termination codons UAA and UAG. In Mus musculus (Mouse), this protein is Peptide chain release factor 1-like, mitochondrial (Mtrf1l).